The primary structure comprises 152 residues: UPF0178 protein NIS_0137 (152 aa).

Belongs to the UPF0178 family.

This is UPF0178 protein NIS_0137 from Nitratiruptor sp. (strain SB155-2).